We begin with the raw amino-acid sequence, 218 residues long: MGQKVNPIGLRIGIIRDWESRWYAEKDYADLVHEDLKIREYINKRLQDAAVSRVEIERAANRVNVTIHTAKPGMVIGKGGSEVEALRKALTQLTGKREHINIVEIKKPDLDAKLVAENIARQLENRVSFRRAQKQAIQRAMRPGRKGVKTMVVRRLGGAEIARSEHYSEGTVPLHTLRADIDYATAEADTTYGKIGVKVWIYRGEVLPTKKKAEEGGK.

The 69-residue stretch at 38–106 folds into the KH type-2 domain; it reads IREYINKRLQ…REHINIVEIK (69 aa).

The protein belongs to the universal ribosomal protein uS3 family. In terms of assembly, part of the 30S ribosomal subunit. Forms a tight complex with proteins S10 and S14.

Its function is as follows. Binds the lower part of the 30S subunit head. Binds mRNA in the 70S ribosome, positioning it for translation. This is Small ribosomal subunit protein uS3 from Geobacillus stearothermophilus (Bacillus stearothermophilus).